Reading from the N-terminus, the 183-residue chain is Copper transporter 4 (183 aa).

Residues 1 to 21 are disordered; it reads MAMPMPMPPPGPGGDAPPAPT. 2 helical membrane passes run 56 to 76 and 115 to 135; these read VGMYFLCLLLVLALAALAEAL and LAYLVMLAVMSFNAGVLLAAV.

This sequence belongs to the copper transporter (Ctr) (TC 1.A.56) family. SLC31A subfamily.

The protein resides in the membrane. In terms of biological role, involved in the transport of copper. The protein is Copper transporter 4 (COPT4) of Oryza sativa subsp. japonica (Rice).